Consider the following 213-residue polypeptide: N-(5'-phosphoribosyl)anthranilate isomerase (213 aa).

The protein belongs to the TrpF family.

It carries out the reaction N-(5-phospho-beta-D-ribosyl)anthranilate = 1-(2-carboxyphenylamino)-1-deoxy-D-ribulose 5-phosphate. It participates in amino-acid biosynthesis; L-tryptophan biosynthesis; L-tryptophan from chorismate: step 3/5. This is N-(5'-phosphoribosyl)anthranilate isomerase from Methanocella arvoryzae (strain DSM 22066 / NBRC 105507 / MRE50).